The primary structure comprises 305 residues: Olfactory receptor 4F5 (305 aa).

At Met-1–Thr-18 the chain is on the extracellular side. Residues Phe-19–Val-42 form a helical membrane-spanning segment. Over Val-43–Ser-50 the chain is Cytoplasmic. Residues Pro-51–Pro-72 traverse the membrane as a helical segment. Residues Lys-73–Gln-93 lie on the Extracellular side of the membrane. The cysteines at positions 90 and 182 are disulfide-linked. Residues Ile-94–Phe-113 form a helical membrane-spanning segment. Over Asp-114 to Asn-132 the chain is Cytoplasmic. Residues Ala-133–Ser-151 form a helical membrane-spanning segment. Residues Gln-152–Leu-188 are Extracellular-facing. A helical transmembrane segment spans residues Asp-189 to Thr-212. Residues Ile-213–Lys-228 are Cytoplasmic-facing. A helical membrane pass occupies residues Ala-229–Tyr-251. The Extracellular portion of the chain corresponds to Ala-252–Lys-262. The helical transmembrane segment at Phe-263–Leu-282 threads the bilayer. At Arg-283–Phe-305 the chain is on the cytoplasmic side.

It belongs to the G-protein coupled receptor 1 family.

It localises to the cell membrane. Odorant receptor. In Homo sapiens (Human), this protein is Olfactory receptor 4F5 (OR4F5).